We begin with the raw amino-acid sequence, 201 residues long: Probable GTP-binding protein EngB (201 aa).

In terms of domain architecture, EngB-type G spans 22–195 (TQPEFAFAGK…WRCIEQFLEV (174 aa)). GTP is bound by residues 30 to 37 (GKSNVGKS), 57 to 61 (GKTQT), 75 to 78 (DLPG), 142 to 145 (TKLD), and 174 to 176 (FSS). Residues serine 37 and threonine 59 each contribute to the Mg(2+) site.

It belongs to the TRAFAC class TrmE-Era-EngA-EngB-Septin-like GTPase superfamily. EngB GTPase family. Requires Mg(2+) as cofactor.

Necessary for normal cell division and for the maintenance of normal septation. The sequence is that of Probable GTP-binding protein EngB from Lachnoclostridium phytofermentans (strain ATCC 700394 / DSM 18823 / ISDg) (Clostridium phytofermentans).